The primary structure comprises 324 residues: Transmembrane protein 171 (324 aa).

4 helical membrane-spanning segments follow: residues 22 to 42 (IFCF…LSIF), 57 to 77 (MVLK…VILA), 113 to 133 (LIFG…GIWV), and 160 to 180 (FLSL…FFVV). A compositionally biased stretch (low complexity) spans 229-239 (PESSASAVAES). Disordered stretches follow at residues 229–248 (PESS…LLPN) and 279–304 (YTIS…PPRY). Positions 279–291 (YTISGTNSSSEAS) are enriched in polar residues.

It is found in the membrane. The chain is Transmembrane protein 171 (TMEM171) from Homo sapiens (Human).